Consider the following 271-residue polypeptide: Expansin-B1 (271 aa).

An N-terminal signal peptide occupies residues 1–24; sequence MQLFPVILPTLCVFLHLLISGSGS. The Expansin-like EG45 domain occupies 58 to 169; the sequence is GGACGYGSLV…RRTACKYRGK (112 aa). 3 disulfides stabilise this stretch: cysteine 61/cysteine 90, cysteine 93/cysteine 164, and cysteine 98/cysteine 104. Positions 182–263 constitute an Expansin-like CBD domain; that stretch reads YWLSLLIEYE…NWVPKATYTS (82 aa). Asparagine 242 carries N-linked (GlcNAc...) asparagine glycosylation.

The protein belongs to the expansin family. Expansin B subfamily.

Its subcellular location is the secreted. The protein resides in the cell wall. It is found in the membrane. Functionally, may cause loosening and extension of plant cell walls by disrupting non-covalent bonding between cellulose microfibrils and matrix glucans. No enzymatic activity has been found. The sequence is that of Expansin-B1 (EXPB1) from Arabidopsis thaliana (Mouse-ear cress).